Reading from the N-terminus, the 335-residue chain is Acyl-CoA Delta(11) desaturase (335 aa).

3 helical membrane passes run 39 to 59 (LLTF…CFTS), 64 to 84 (TIIL…AGAH), and 98 to 118 (LQII…IHWI). Residues 84–89 (HRLWAH) carry the Histidine box-1 motif. Positions 121 to 125 (HRMHH) match the Histidine box-2 motif. 2 helical membrane-spanning segments follow: residues 182 to 202 (AIPF…MYFW) and 213 to 235 (TMLR…HLYG). The Histidine box-3 motif lies at 261-265 (HNYHH). The interval 312–335 (MKRTGDGTDVSGQKYSCESSEVLQ) is disordered. A compositionally biased stretch (polar residues) spans 321 to 335 (VSGQKYSCESSEVLQ).

It belongs to the fatty acid desaturase type 1 family. Fe cation is required as a cofactor. As to expression, detected in pheromone gland.

Its subcellular location is the membrane. It carries out the reaction an 11,12-saturated fatty acyl-CoA + 2 Fe(II)-[cytochrome b5] + O2 + 2 H(+) = an (11Z)-Delta(11)-fatty acyl-CoA + 2 Fe(III)-[cytochrome b5] + 2 H2O. Its function is as follows. Catalyzes the formation of Delta(11) fatty acyl precursors in the pheromone gland, with a preference for myristic acid. The polypeptide is Acyl-CoA Delta(11) desaturase (Choristoneura rosaceana (Oblique banded leafroller)).